A 360-amino-acid chain; its full sequence is MKRAYNFNAGPSALPLPVLERAQKELLNFQNTGMSVMELSHRSKEYEAVHHAAKERLKRLLNVPDGYDILFLQGGASLQFSMVPMNLLTEGKIGCYVLTGAWSEKALKEAQKIGLTTVVASSKEANYTYIPPLDDVQWPKNAAYVHITSNNTIFGTQWKEFPNTPVDLVADMSSDILSRPFDVSQFALIYAGAQKNLGPSGVTVVILRNDLLERIPDGLPTMLDYRTHQKSNSLYNTPPTFAIYMLSLVLEWVEEQGGVAAMEERNQQKAAVLYEAIDESGGFYKPHAEKGSRSLMNVTFTLPNEELTKTFLAEAKERGFVGLGGHRSVGGCRASIYNAVPLEACEALASFMNEFRRRFA.

Arg-42 is an L-glutamate binding site. Residues 76 to 77 (AS), Trp-102, Thr-152, Asp-171, and Gln-194 contribute to the pyridoxal 5'-phosphate site. N6-(pyridoxal phosphate)lysine is present on Lys-195. 236–237 (NT) serves as a coordination point for pyridoxal 5'-phosphate.

The protein belongs to the class-V pyridoxal-phosphate-dependent aminotransferase family. SerC subfamily. Homodimer. It depends on pyridoxal 5'-phosphate as a cofactor.

It localises to the cytoplasm. The enzyme catalyses O-phospho-L-serine + 2-oxoglutarate = 3-phosphooxypyruvate + L-glutamate. The catalysed reaction is 4-(phosphooxy)-L-threonine + 2-oxoglutarate = (R)-3-hydroxy-2-oxo-4-phosphooxybutanoate + L-glutamate. Its pathway is amino-acid biosynthesis; L-serine biosynthesis; L-serine from 3-phospho-D-glycerate: step 2/3. Its function is as follows. Catalyzes the reversible conversion of 3-phosphohydroxypyruvate to phosphoserine and of 3-hydroxy-2-oxo-4-phosphonooxybutanoate to phosphohydroxythreonine. In Geobacillus kaustophilus (strain HTA426), this protein is Phosphoserine aminotransferase.